Reading from the N-terminus, the 187-residue chain is Protein GrpE (187 aa).

Residues 1–11 (MTDSSNEHETE) are compositionally biased toward basic and acidic residues. The disordered stretch occupies residues 1–21 (MTDSSNEHETENPSLPIPDNE).

It belongs to the GrpE family. Homodimer.

It is found in the cytoplasm. Its function is as follows. Participates actively in the response to hyperosmotic and heat shock by preventing the aggregation of stress-denatured proteins, in association with DnaK and GrpE. It is the nucleotide exchange factor for DnaK and may function as a thermosensor. Unfolded proteins bind initially to DnaJ; upon interaction with the DnaJ-bound protein, DnaK hydrolyzes its bound ATP, resulting in the formation of a stable complex. GrpE releases ADP from DnaK; ATP binding to DnaK triggers the release of the substrate protein, thus completing the reaction cycle. Several rounds of ATP-dependent interactions between DnaJ, DnaK and GrpE are required for fully efficient folding. The sequence is that of Protein GrpE from Chlamydia caviae (strain ATCC VR-813 / DSM 19441 / 03DC25 / GPIC) (Chlamydophila caviae).